Consider the following 227-residue polypeptide: tRNA (guanine-N(1)-)-methyltransferase (227 aa).

Residues Gly-110 and 129–134 (IGDYVL) contribute to the S-adenosyl-L-methionine site.

The protein belongs to the RNA methyltransferase TrmD family. Homodimer.

The protein localises to the cytoplasm. The catalysed reaction is guanosine(37) in tRNA + S-adenosyl-L-methionine = N(1)-methylguanosine(37) in tRNA + S-adenosyl-L-homocysteine + H(+). In terms of biological role, specifically methylates guanosine-37 in various tRNAs. This Mycoplasmopsis synoviae (strain 53) (Mycoplasma synoviae) protein is tRNA (guanine-N(1)-)-methyltransferase.